The following is a 306-amino-acid chain: Glutathione transport system permease protein GsiC (306 aa).

The Cytoplasmic segment spans residues 1-8 (MLNYVIKR). A helical transmembrane segment spans residues 9–29 (LLGLIPTLFIVSVLVFLFVHM). Topologically, residues 30–102 (LPGDPARLIA…SRFMPTLWLT (73 aa)) are periplasmic. The region spanning 95–292 (FMPTLWLTIT…LEFILINLVV (198 aa)) is the ABC transmembrane type-1 domain. The helical transmembrane segment at 103 to 123 (ITSMVWAVIFGMAAGIIAAVW) threads the bilayer. Over 124 to 134 (RNRWPDRLSMT) the chain is Cytoplasmic. Residues 135–155 (IAVSGISFPAFALGMLLIQVF) form a helical membrane-spanning segment. Topologically, residues 156-168 (SVELGWLPTVGAD) are periplasmic. Residues 169 to 189 (SWQHYILSSLTLGAAVAAVMA) traverse the membrane as a helical segment. Over 190 to 228 (RFTRASFVDVLSEDYMRTARAKGVSETWVVLKHGLRNAM) the chain is Cytoplasmic. Residues 229–249 (IPVVTMMGLQFGFLLGGSIVV) traverse the membrane as a helical segment. At 250–277 (EKVFNWPGLGRLLVDSVEMRDYPVIQAE) the chain is on the periplasmic side. The chain crosses the membrane as a helical span at residues 278 to 298 (ILLFSLEFILINLVVDVLYAA). At 299–306 (INPAIRYK) the chain is on the cytoplasmic side.

It belongs to the binding-protein-dependent transport system permease family. In terms of assembly, the complex is composed of two ATP-binding proteins (GsiA), two transmembrane proteins (GsiC and GsiD) and a solute-binding protein (GsiB).

It localises to the cell inner membrane. Its function is as follows. Part of the ABC transporter complex GsiABCD involved in glutathione import. Probably responsible for the translocation of the substrate across the membrane. In Shigella boydii serotype 4 (strain Sb227), this protein is Glutathione transport system permease protein GsiC.